We begin with the raw amino-acid sequence, 130 residues long: MMKITLKKGILGFENLKEYELLDIENEDILKEFNSTEEDCIGFIVVSPFEIIKEYEIVLNQETIEKLEVKSPNDIMLLNIITVGQTLEESTVNMKAPIVINVRNNCGMQIILQDEEYSIWHPLLRGDGGC.

This sequence belongs to the FliW family. As to quaternary structure, interacts with translational regulator CsrA and flagellin(s).

Its subcellular location is the cytoplasm. In terms of biological role, acts as an anti-CsrA protein, binds CsrA and prevents it from repressing translation of its target genes, one of which is flagellin. Binds to flagellin and participates in the assembly of the flagellum. The protein is Flagellar assembly factor FliW of Clostridioides difficile (strain 630) (Peptoclostridium difficile).